A 307-amino-acid polypeptide reads, in one-letter code: Ribosomal RNA small subunit methyltransferase H (307 aa).

S-adenosyl-L-methionine-binding positions include 32-34 (GGH), aspartate 52, phenylalanine 78, aspartate 100, and glutamine 107.

Belongs to the methyltransferase superfamily. RsmH family.

The protein resides in the cytoplasm. It catalyses the reaction cytidine(1402) in 16S rRNA + S-adenosyl-L-methionine = N(4)-methylcytidine(1402) in 16S rRNA + S-adenosyl-L-homocysteine + H(+). Functionally, specifically methylates the N4 position of cytidine in position 1402 (C1402) of 16S rRNA. In Coxiella burnetii (strain Dugway 5J108-111), this protein is Ribosomal RNA small subunit methyltransferase H.